The sequence spans 184 residues: MREYKLVVLGSGGVGKSALTVQFVQGIFVEKYDPTIEDSYRKQVEVDAQQCMLEILDTAGTEQFTAMRDLYMKNGQGFALVYSITAQSTFNDLQDLREQILRVKDTDDVPMILVGNKCDLEDERVVGKEQGQNLARQWNNCAFLESSAKSKINVNEIFYDLVRQINRKTPVPGKARKKSSCQLL.

Residue 10 to 18 participates in GTP binding; it reads GSGGVGKSA. An interaction with KRIT1 region spans residues 25 to 67; it reads QGIFVEKYDPTIEDSYRKQVEVDAQQCMLEILDTAGTEQFTAM. Residues 32-40 carry the Effector region motif; the sequence is YDPTIEDSY. Residues 57–61, 116–119, and 147–149 contribute to the GTP site; these read DTAGT, NKCD, and SAK. Phosphoserine; by PKA is present on Ser179. The residue at position 181 (Cys181) is a Cysteine methyl ester. Cys181 carries the S-geranylgeranyl cysteine lipid modification. A propeptide spans 182 to 184 (removed in mature form); sequence QLL.

In terms of assembly, heterodimer with RAP1GAP. Interacts with EPAC2. Interacts with SGSM1. Interacts with SGSM2. Interacts with SGSM3. Interacts with KRIT1. Interacts with RAP1GDS1.

Its subcellular location is the cell membrane. It localises to the cytoplasm. It is found in the cytosol. The protein localises to the cell junction. It catalyses the reaction GTP + H2O = GDP + phosphate + H(+). With respect to regulation, activated by guanine nucleotide-exchange factor (GEF) EPAC2 in a cAMP-dependent manner. In terms of biological role, GTP-binding protein that possesses intrinsic GTPase activity. Contributes to the polarizing activity of KRIT1 and CDH5 in the establishment and maintenance of correct endothelial cell polarity and vascular lumen. Required for the localization of phosphorylated PRKCZ, PARD3 and TIAM1 to the cell junction. Plays a role in the establishment of basal endothelial barrier function. The protein is Ras-related protein Rap-1b (RAP1B) of Bos taurus (Bovine).